The chain runs to 98 residues: NADH-ubiquinone oxidoreductase chain 4L (98 aa).

3 consecutive transmembrane segments (helical) span residues 1–21 (MSMVYANIFLAFIMSLMGLLM), 29–49 (SLLCLEGMMLSLFVMMTVTIL), and 61–81 (IILLVFAACEAALGLLLLVMV).

Belongs to the complex I subunit 4L family. As to quaternary structure, core subunit of respiratory chain NADH dehydrogenase (Complex I) which is composed of 45 different subunits.

It is found in the mitochondrion inner membrane. It catalyses the reaction a ubiquinone + NADH + 5 H(+)(in) = a ubiquinol + NAD(+) + 4 H(+)(out). Functionally, core subunit of the mitochondrial membrane respiratory chain NADH dehydrogenase (Complex I) which catalyzes electron transfer from NADH through the respiratory chain, using ubiquinone as an electron acceptor. Part of the enzyme membrane arm which is embedded in the lipid bilayer and involved in proton translocation. The polypeptide is NADH-ubiquinone oxidoreductase chain 4L (MT-ND4L) (Pusa hispida (Ringed seal)).